We begin with the raw amino-acid sequence, 564 residues long: MNNSSELIAVINGFRNSGRFCDIDIVINDERINAHRLILSGASEYFSILFSSDFIDSNKYEVNLSHLDYQSVNDLIDYIYGIPLSLTNDIVKYILSTADFLQIGSAITECENYILKNLCSRNCIDFYIYADKYNNKKIETASFNTILLNILRLINDENFKYLTEESMIKFLSDDMLNIKNEDFAPLILIKWLESTQQPCTVELLRCLRISLLSPQVIKSLYSHRLVGSIYECITFLNNISFLDESFPRYHSIELISIGISNSHDKISINCYNRKKNTWDIISSRRYRCSFAVAVLDNIIYMMGGYDQSPYRSSKVIAYNTCTNSWIYDIPELKYPRSNCGGVADDEYIYCIGGIRDQDSSLISSIDRWKPSKPYWQTYAKIREPKCDMGVAMLNGLIYVIGGVVKGDTCTDTLESLSQDGWMMHQRLPIKMSNMSTIVHAGKIYISGGYNNSSVVNGISNLVLSYNPIYDEWTKLSSLNIPRINPALWSVHNKLYVGGGISDDIQTNTSETYDKEKDCWTLDNGHMLPRNYIMYKCEPIKHKYPLEKTQYTNDFLKYLESFIGS.

The region spanning C21–N88 is the BTB domain. The region spanning C123–S219 is the BACK domain. Kelch repeat units lie at residues I252–N297, I298–E346, Y347–G395, I397–G441, K442–N492, and L494–I539.

As to quaternary structure, interacts (via BTB domain) with host CUL3.

It is found in the host cytoplasm. Its function is as follows. Probable substrate-specific adapter of CUL3-containing E3 ubiquitin-protein ligases which mediate the ubiquitination and subsequent proteasomal degradation of host target proteins. The polypeptide is Kelch repeat and BTB domain-containing protein 1 (KBTB1) (Camelus).